Reading from the N-terminus, the 309-residue chain is Malate dehydrogenase (309 aa).

NAD(+)-binding positions include 7-12 (GAGHVG) and aspartate 32. Arginine 81 and arginine 87 together coordinate substrate. NAD(+) is bound by residues asparagine 94 and 117 to 119 (VSN). Substrate is bound by residues asparagine 119 and arginine 150. The active-site Proton acceptor is the histidine 174.

The protein belongs to the LDH/MDH superfamily. MDH type 3 family.

The enzyme catalyses (S)-malate + NAD(+) = oxaloacetate + NADH + H(+). Functionally, catalyzes the reversible oxidation of malate to oxaloacetate. This is Malate dehydrogenase from Chlorobium phaeovibrioides (strain DSM 265 / 1930) (Prosthecochloris vibrioformis (strain DSM 265)).